The primary structure comprises 529 residues: CTP synthase (529 aa).

Residues 1–266 form an amidoligase domain region; the sequence is MTKYIIVTGG…TKKIFNKLGL (266 aa). S13 provides a ligand contact to CTP. S13 is a binding site for UTP. Position 14-19 (14-19) interacts with ATP; that stretch reads SVGKGT. Y54 contributes to the L-glutamine binding site. An ATP-binding site is contributed by D71. The Mg(2+) site is built by D71 and E141. CTP contacts are provided by residues 148–150, 187–192, and K223; these read DIE and KTKPLQ. Residues 187–192 and K223 each bind UTP; that span reads KTKPLQ. The Glutamine amidotransferase type-1 domain occupies 291 to 529; it reads KIALVGKYTK…FLNFLSVASA (239 aa). An L-glutamine-binding site is contributed by G354. C381 functions as the Nucleophile; for glutamine hydrolysis in the catalytic mechanism. Residues 382–385, E405, and R462 each bind L-glutamine; that span reads FGMQ. Residues H506 and E508 contribute to the active site.

The protein belongs to the CTP synthase family. As to quaternary structure, homotetramer.

It carries out the reaction UTP + L-glutamine + ATP + H2O = CTP + L-glutamate + ADP + phosphate + 2 H(+). The enzyme catalyses L-glutamine + H2O = L-glutamate + NH4(+). The catalysed reaction is UTP + NH4(+) + ATP = CTP + ADP + phosphate + 2 H(+). The protein operates within pyrimidine metabolism; CTP biosynthesis via de novo pathway; CTP from UDP: step 2/2. Its activity is regulated as follows. Allosterically activated by GTP, when glutamine is the substrate; GTP has no effect on the reaction when ammonia is the substrate. The allosteric effector GTP functions by stabilizing the protein conformation that binds the tetrahedral intermediate(s) formed during glutamine hydrolysis. Inhibited by the product CTP, via allosteric rather than competitive inhibition. Catalyzes the ATP-dependent amination of UTP to CTP with either L-glutamine or ammonia as the source of nitrogen. Regulates intracellular CTP levels through interactions with the four ribonucleotide triphosphates. The chain is CTP synthase from Sulfolobus acidocaldarius (strain ATCC 33909 / DSM 639 / JCM 8929 / NBRC 15157 / NCIMB 11770).